We begin with the raw amino-acid sequence, 460 residues long: Light-independent protochlorophyllide reductase subunit N (460 aa).

[4Fe-4S] cluster contacts are provided by Cys-20, Cys-45, and Cys-105.

It belongs to the BchN/ChlN family. In terms of assembly, protochlorophyllide reductase is composed of three subunits; ChlL, ChlN and ChlB. Forms a heterotetramer of two ChlB and two ChlN subunits. [4Fe-4S] cluster serves as cofactor.

It is found in the plastid. It localises to the chloroplast. It carries out the reaction chlorophyllide a + oxidized 2[4Fe-4S]-[ferredoxin] + 2 ADP + 2 phosphate = protochlorophyllide a + reduced 2[4Fe-4S]-[ferredoxin] + 2 ATP + 2 H2O. It participates in porphyrin-containing compound metabolism; chlorophyll biosynthesis (light-independent). Functionally, component of the dark-operative protochlorophyllide reductase (DPOR) that uses Mg-ATP and reduced ferredoxin to reduce ring D of protochlorophyllide (Pchlide) to form chlorophyllide a (Chlide). This reaction is light-independent. The NB-protein (ChlN-ChlB) is the catalytic component of the complex. This is Light-independent protochlorophyllide reductase subunit N from Adiantum capillus-veneris (Maidenhair fern).